A 318-amino-acid chain; its full sequence is Myoblast determination protein 1 (318 aa).

Met-1 participates in a covalent cross-link: Peptide (Met-Gly) (interchain with G-Cter in ubiquitin). The residue at position 104 (Lys-104) is an N6-methyllysine; by EHMT2. Positions 109–160 constitute a bHLH domain; the sequence is DRRKAATMRERRRLSKVNEAFETLKRCTSSNPNQRLPKVEILRNAIRYIEGL. Disordered regions lie at residues 175–224 and 262–318; these read AAFY…RQNG and SPAA…YQVL. A compositionally biased stretch (polar residues) spans 196-206; it reads SDASSPRSNCS. Residues 262-271 are compositionally biased toward low complexity; the sequence is SPAAPSLLLP. Over residues 272 to 282 the composition is skewed to pro residues; the sequence is DAPPESPPGPP. A compositionally biased stretch (polar residues) spans 290-304; sequence AEQGTQTPSPDSTPQ.

As to quaternary structure, efficient DNA binding requires dimerization with another bHLH protein. Seems to form active heterodimers with ITF-2. Interacts with SUV39H1. Interacts with DDX5. Interacts with CHD2. Interacts with TSC22D3. Interacts with SETD3. Interacts with P-TEFB complex; promotes the transcriptional activity of MYOD1 through its CDK9-mediated phosphorylation. Interacts with CSRP3. Interacts with NUPR1. Phosphorylated by CDK9. This phosphorylation promotes its function in muscle differentiation. Post-translationally, acetylated by a complex containing EP300 and PCAF. The acetylation is essential to activate target genes. Conversely, its deacetylation by SIRT1 inhibits its function. In terms of processing, ubiquitinated on the N-terminus; which is required for proteasomal degradation. Methylation at Lys-104 by EHMT2/G9a inhibits myogenic activity.

It localises to the nucleus. In terms of biological role, acts as a transcriptional activator that promotes transcription of muscle-specific target genes and plays a role in muscle differentiation. Together with MYF5 and MYOG, co-occupies muscle-specific gene promoter core region during myogenesis. Induces fibroblasts to differentiate into myoblasts. Interacts with and is inhibited by the twist protein. This interaction probably involves the basic domains of both proteins. The sequence is that of Myoblast determination protein 1 (Myod1) from Rattus norvegicus (Rat).